The chain runs to 131 residues: uncharacterized protein (131 aa).

Positions 1 to 16 (MDVLFVAIFAVPLILG) are cleaved as a signal peptide.

The protein resides in the secreted. This is an uncharacterized protein from Homo sapiens (Human).